A 246-amino-acid chain; its full sequence is Putative carbonic anhydrase 3 (246 aa).

The Alpha-carbonic anhydrase domain occupies 3 to 244; the sequence is GHWSYCDDDE…LNDRKIVHIV (242 aa). The active-site Proton acceptor is H61. H91, H93, and H116 together coordinate Zn(2+). 187–188 serves as a coordination point for substrate; it reads TT.

The protein belongs to the alpha-carbonic anhydrase family. Requires Zn(2+) as cofactor.

It carries out the reaction hydrogencarbonate + H(+) = CO2 + H2O. Reversible hydration of carbon dioxide. This chain is Putative carbonic anhydrase 3 (cah-3), found in Caenorhabditis elegans.